The following is a 268-amino-acid chain: Proenkephalin-A (268 aa).

Residues 1–24 form the signal peptide; it reads MARLLRLCTWLVALGPGLLATVQA. 3 disulfide bridges follow: C26/C48, C30/C52, and C33/C65. Residues 163-184 form a disordered region; it reads TGDDRDRENHHQEGGDSDEGVS. Over residues 164–176 the composition is skewed to basic and acidic residues; that stretch reads GDDRDRENHHQEG. 2 consecutive propeptides follow at residues 197-208 and 218-228; these read SPQVEDEAKELQ and VGRPEWWMDYQ. S252 carries the phosphoserine modification.

It belongs to the opioid neuropeptide precursor family. In terms of processing, proenkephalin-A is cleaved by CTSL to generate Met-enkephalin. Processed and degraded by ACE. Post-translationally, probably cleaved by ACE. In terms of processing, processed by ACE to generate Met-enkephalin in the nucleus accumbens of the brain. The N-terminal domain contains 6 conserved cysteines thought to be involved in disulfide bonding and/or processing.

The protein resides in the cytoplasmic vesicle. The protein localises to the secretory vesicle. It is found in the chromaffin granule lumen. Its subcellular location is the secreted. In terms of biological role, neuropeptide that competes with and mimic the effects of opiate drugs. They play a role in a number of physiologic functions, including pain perception and responses to stress. Its function is as follows. Met-enkephalin-Arg-Phe neuropeptide acts as a strong ligand of Mu-type opioid receptor OPRM1. Met-enkephalin-Arg-Phe-binding to OPRM1 in the nucleus accumbens of the brain increases activation of OPRM1, leading to long-term synaptic depression of glutamate release. Functionally, increases glutamate release in the striatum and decreases GABA concentration in the striatum. Increases glutamate release in the striatum. The sequence is that of Proenkephalin-A (PENK) from Cavia porcellus (Guinea pig).